Reading from the N-terminus, the 490-residue chain is Pup--protein ligase (490 aa).

Glu9 contacts Mg(2+). Position 53 (Arg53) interacts with ATP. Tyr55 is a Mg(2+) binding site. Asp57 acts as the Proton acceptor in catalysis. Glu63 provides a ligand contact to Mg(2+). ATP is bound at residue Ser66. The interval 160–181 (KTHPNGGPVPGSTDPASSTGVP) is disordered. Trp441 serves as a coordination point for ATP.

It belongs to the Pup ligase/Pup deamidase family. Pup-conjugating enzyme subfamily.

The enzyme catalyses ATP + [prokaryotic ubiquitin-like protein]-L-glutamate + [protein]-L-lysine = ADP + phosphate + N(6)-([prokaryotic ubiquitin-like protein]-gamma-L-glutamyl)-[protein]-L-lysine.. It participates in protein degradation; proteasomal Pup-dependent pathway. Its pathway is protein modification; protein pupylation. Its function is as follows. Catalyzes the covalent attachment of the prokaryotic ubiquitin-like protein modifier Pup to the proteasomal substrate proteins, thereby targeting them for proteasomal degradation. This tagging system is termed pupylation. The ligation reaction involves the side-chain carboxylate of the C-terminal glutamate of Pup and the side-chain amino group of a substrate lysine. This Rothia mucilaginosa (strain DY-18) (Stomatococcus mucilaginosus) protein is Pup--protein ligase.